We begin with the raw amino-acid sequence, 186 residues long: Acireductone dioxygenase (186 aa).

Residues His-103, His-105, Glu-109, and His-147 each contribute to the Fe(2+) site. Positions 103, 105, 109, and 147 each coordinate Ni(2+).

It belongs to the acireductone dioxygenase (ARD) family. As to quaternary structure, monomer. Fe(2+) is required as a cofactor. Requires Ni(2+) as cofactor.

It carries out the reaction 1,2-dihydroxy-5-(methylsulfanyl)pent-1-en-3-one + O2 = 3-(methylsulfanyl)propanoate + CO + formate + 2 H(+). It catalyses the reaction 1,2-dihydroxy-5-(methylsulfanyl)pent-1-en-3-one + O2 = 4-methylsulfanyl-2-oxobutanoate + formate + 2 H(+). The protein operates within amino-acid biosynthesis; L-methionine biosynthesis via salvage pathway; L-methionine from S-methyl-5-thio-alpha-D-ribose 1-phosphate: step 5/6. Catalyzes 2 different reactions between oxygen and the acireductone 1,2-dihydroxy-3-keto-5-methylthiopentene (DHK-MTPene) depending upon the metal bound in the active site. Fe-containing acireductone dioxygenase (Fe-ARD) produces formate and 2-keto-4-methylthiobutyrate (KMTB), the alpha-ketoacid precursor of methionine in the methionine recycle pathway. Ni-containing acireductone dioxygenase (Ni-ARD) produces methylthiopropionate, carbon monoxide and formate, and does not lie on the methionine recycle pathway. The polypeptide is Acireductone dioxygenase (Parasynechococcus marenigrum (strain WH8102)).